The primary structure comprises 620 residues: MFDFQHQLKILPDKPGVYIMKNSLGEVIYVGKAKVLKNRVRQYFQNSKNHSEKVRAMVKNIAEFEYIVTDSEMEALILECNLIKKYSPRYNIALKDDKFYPFIKITTNEDFPRVYVTRNFAKDGNRYFGPYTNGTAVYEVMGLIKKLFPLRTCKKAIVEGGEPTRACLNYHINLCKAPCAGYISKAEYWEMIDEIINILNGTDTSIIKKLKLEMEKAAEELEFEKAAKIRDRILAIELISEKQKMFTVKEGDEDFIDLYTDEKDGCAQVFFVREGKVTGREHFMIENISDDPVKEVISSFIASFYGGTAQIPKTIYVPEEIEDQELIEKFLTEKRGSKVWIKVPKKGDKKNLLDMVRNNAKIMLDQFKEKMVEEKELNKSALTELADVLGLDSLPARIEAYDISNIQGVDSVGTMVVFENGKAKNSDYRRFKIKSVKGPNDYESMREILSRRFSHGLEEVNKIKERNLEYSKGKFCIFPDLIMMDGGKGQVNIALEVLKDFGIEIPVCGLVKDHKHRTRGIIFNNEEILIRRGSGLMNLITRVQDEVHRYAITYHRSLRDKRTLHSILEDIPRIGEKRRRNLLMKFGSIDNIKKASMEELLDTPGIDKRAAESIKQYFSS.

The GIY-YIG domain maps to 13 to 92; sequence DKPGVYIMKN…IKKYSPRYNI (80 aa). Residues 204 to 239 enclose the UVR domain; sequence TSIIKKLKLEMEKAAEELEFEKAAKIRDRILAIELI.

It belongs to the UvrC family. In terms of assembly, interacts with UvrB in an incision complex.

The protein localises to the cytoplasm. The UvrABC repair system catalyzes the recognition and processing of DNA lesions. UvrC both incises the 5' and 3' sides of the lesion. The N-terminal half is responsible for the 3' incision and the C-terminal half is responsible for the 5' incision. The sequence is that of UvrABC system protein C from Clostridium perfringens (strain ATCC 13124 / DSM 756 / JCM 1290 / NCIMB 6125 / NCTC 8237 / Type A).